Consider the following 516-residue polypeptide: Extracellular endo-inulinase inu2 (516 aa).

A signal peptide spans 1–23 (MLNPKVAYMVWMTCLGLTLPSQA). Residues 41 to 43 (MNE) and Asn61 each bind substrate. Residue Glu43 is part of the active site. 2 N-linked (GlcNAc...) asparagine glycosylation sites follow: Asn108 and Asn109. Asp176 is a binding site for substrate. N-linked (GlcNAc...) asparagine glycosylation occurs at Asn210. Asn320 contributes to the substrate binding site. Asn372 is a glycosylation site (N-linked (GlcNAc...) asparagine).

This sequence belongs to the glycosyl hydrolase 32 family.

It is found in the secreted. It carries out the reaction Endohydrolysis of (2-&gt;1)-beta-D-fructosidic linkages in inulin.. Endo-inulinase involved in utilization of the plant storage polymer inulin, consisting of fructooligosaccharides with a degree of polymerization (DP) value from 2 to 60. This is Extracellular endo-inulinase inu2 (inu2) from Aspergillus ficuum.